The chain runs to 21 residues: Fibrinogen beta chain (21 aa).

Residue Gln-1 is modified to Pyrrolidone carboxylic acid. The segment covering 1–11 has biased composition (acidic residues); sequence QPSYDYDEEED. The interval 1–21 is disordered; sequence QPSYDYDEEEDDRAKLRLDAR. At Tyr-6 the chain carries Sulfotyrosine. Residues 12–21 are compositionally biased toward basic and acidic residues; that stretch reads DRAKLRLDAR.

In terms of assembly, heterohexamer; disulfide linked. Contains 2 sets of 3 non-identical chains (alpha, beta and gamma). The 2 heterotrimers are in head to head conformation with the N-termini in a small central domain. Conversion of fibrinogen to fibrin is triggered by thrombin, which cleaves fibrinopeptides A and B from alpha and beta chains, and thus exposes the N-terminal polymerization sites responsible for the formation of the soft clot.

The protein resides in the secreted. Its function is as follows. Cleaved by the protease thrombin to yield monomers which, together with fibrinogen alpha (FGA) and fibrinogen gamma (FGG), polymerize to form an insoluble fibrin matrix. Fibrin has a major function in hemostasis as one of the primary components of blood clots. In addition, functions during the early stages of wound repair to stabilize the lesion and guide cell migration during re-epithelialization. Was originally thought to be essential for platelet aggregation, based on in vitro studies using anticoagulated blood. However subsequent studies have shown that it is not absolutely required for thrombus formation in vivo. Enhances expression of SELP in activated platelets. Maternal fibrinogen is essential for successful pregnancy. Fibrin deposition is also associated with infection, where it protects against IFNG-mediated hemorrhage. May also facilitate the antibacterial immune response via both innate and T-cell mediated pathways. The chain is Fibrinogen beta chain (FGB) from Antilocapra americana (Pronghorn).